Consider the following 389-residue polypeptide: Methionyl-tRNA formyltransferase, mitochondrial (389 aa).

This sequence belongs to the Fmt family.

The protein resides in the mitochondrion. It carries out the reaction L-methionyl-tRNA(fMet) + (6R)-10-formyltetrahydrofolate = N-formyl-L-methionyl-tRNA(fMet) + (6S)-5,6,7,8-tetrahydrofolate + H(+). Methionyl-tRNA formyltransferase that formylates methionyl-tRNA in mitochondria and is crucial for translation initiation. The polypeptide is Methionyl-tRNA formyltransferase, mitochondrial (MTFMT) (Homo sapiens (Human)).